The primary structure comprises 91 residues: Potassium channel toxin TstKMK (91 aa).

An N-terminal signal peptide occupies residues 1-25 (MVATNRCCVFALLFALLLVHSLTEA). Residues 26 to 42 (GKGKEILGKIKEKIIEA) constitute a propeptide that is removed on maturation. The BetaSPN-type CS-alpha/beta domain occupies 58-91 (EYACPAIDKFCEDHCAAKKAVGKCDDFKCKCIKL). 3 cysteine pairs are disulfide-bonded: Cys-61–Cys-81, Cys-68–Cys-86, and Cys-72–Cys-88.

Belongs to the long chain scorpion toxin family. Class 2 subfamily. In terms of tissue distribution, expressed by the venom gland.

Its subcellular location is the secreted. Its function is as follows. The full peptide presents antibacterial and cytotoxic activities. The synthetic C-terminus (AA 33-76) inhibits voltage-gated potassium channels Kv1.1/KCNA1, Kv1.2/KCNA2, and Kv1.3/KCNA3. In Tityus stigmurus (Brazilian scorpion), this protein is Potassium channel toxin TstKMK.